Reading from the N-terminus, the 121-residue chain is Large ribosomal subunit protein bL20 (121 aa).

This sequence belongs to the bacterial ribosomal protein bL20 family.

Binds directly to 23S ribosomal RNA and is necessary for the in vitro assembly process of the 50S ribosomal subunit. It is not involved in the protein synthesizing functions of that subunit. The polypeptide is Large ribosomal subunit protein bL20 (Wolbachia pipientis subsp. Culex pipiens (strain wPip)).